The following is a 164-amino-acid chain: 6,7-dimethyl-8-ribityllumazine synthase 1 (164 aa).

5-amino-6-(D-ribitylamino)uracil is bound by residues F27, 58–60 (SLE), and 87–89 (TII). Residue 92-93 (DT) participates in (2S)-2-hydroxy-3-oxobutyl phosphate binding. H95 functions as the Proton donor in the catalytic mechanism. Residue N120 participates in 5-amino-6-(D-ribitylamino)uracil binding. R134 is a (2S)-2-hydroxy-3-oxobutyl phosphate binding site.

This sequence belongs to the DMRL synthase family. As to quaternary structure, homopentamer.

It carries out the reaction (2S)-2-hydroxy-3-oxobutyl phosphate + 5-amino-6-(D-ribitylamino)uracil = 6,7-dimethyl-8-(1-D-ribityl)lumazine + phosphate + 2 H2O + H(+). It functions in the pathway cofactor biosynthesis; riboflavin biosynthesis; riboflavin from 2-hydroxy-3-oxobutyl phosphate and 5-amino-6-(D-ribitylamino)uracil: step 1/2. In terms of biological role, catalyzes the formation of 6,7-dimethyl-8-ribityllumazine by condensation of 5-amino-6-(D-ribitylamino)uracil with 3,4-dihydroxy-2-butanone 4-phosphate. This is the penultimate step in the biosynthesis of riboflavin. This Mesorhizobium japonicum (strain LMG 29417 / CECT 9101 / MAFF 303099) (Mesorhizobium loti (strain MAFF 303099)) protein is 6,7-dimethyl-8-ribityllumazine synthase 1 (ribH1).